A 317-amino-acid polypeptide reads, in one-letter code: Glycerol-3-phosphate dehydrogenase [NAD(P)+] (317 aa).

NADPH-binding residues include Trp-20, Arg-40, Arg-41, and Lys-88. Positions 88 and 116 each coordinate sn-glycerol 3-phosphate. NADPH is bound at residue Ser-120. Positions 171, 224, 234, 235, and 236 each coordinate sn-glycerol 3-phosphate. Lys-171 serves as the catalytic Proton acceptor. Arg-235 contacts NADPH. An NADPH-binding site is contributed by Glu-261.

This sequence belongs to the NAD-dependent glycerol-3-phosphate dehydrogenase family.

The protein localises to the cytoplasm. It carries out the reaction sn-glycerol 3-phosphate + NAD(+) = dihydroxyacetone phosphate + NADH + H(+). It catalyses the reaction sn-glycerol 3-phosphate + NADP(+) = dihydroxyacetone phosphate + NADPH + H(+). The protein operates within membrane lipid metabolism; glycerophospholipid metabolism. Functionally, catalyzes the reduction of the glycolytic intermediate dihydroxyacetone phosphate (DHAP) to sn-glycerol 3-phosphate (G3P), the key precursor for phospholipid synthesis. This is Glycerol-3-phosphate dehydrogenase [NAD(P)+] from Synechocystis sp. (strain ATCC 27184 / PCC 6803 / Kazusa).